A 331-amino-acid chain; its full sequence is Holliday junction branch migration complex subunit RuvB (331 aa).

Positions 1-182 (MSSDTLHKYE…FGIPLHLEFY (182 aa)) are large ATPase domain (RuvB-L). ATP contacts are provided by residues leucine 21, arginine 22, glycine 63, lysine 66, threonine 67, threonine 68, 129 to 131 (EDY), arginine 172, tyrosine 182, and arginine 219. Position 67 (threonine 67) interacts with Mg(2+). The interval 183–254 (SVDELVLVIK…FANSALFRLG (72 aa)) is small ATPAse domain (RuvB-S). Positions 257 to 331 (GAGFDKMDLK…FEYLLSSKYI (75 aa)) are head domain (RuvB-H). The DNA site is built by arginine 310 and arginine 315.

It belongs to the RuvB family. As to quaternary structure, homohexamer. Forms an RuvA(8)-RuvB(12)-Holliday junction (HJ) complex. HJ DNA is sandwiched between 2 RuvA tetramers; dsDNA enters through RuvA and exits via RuvB. An RuvB hexamer assembles on each DNA strand where it exits the tetramer. Each RuvB hexamer is contacted by two RuvA subunits (via domain III) on 2 adjacent RuvB subunits; this complex drives branch migration. In the full resolvosome a probable DNA-RuvA(4)-RuvB(12)-RuvC(2) complex forms which resolves the HJ.

It is found in the cytoplasm. It carries out the reaction ATP + H2O = ADP + phosphate + H(+). In terms of biological role, the RuvA-RuvB-RuvC complex processes Holliday junction (HJ) DNA during genetic recombination and DNA repair, while the RuvA-RuvB complex plays an important role in the rescue of blocked DNA replication forks via replication fork reversal (RFR). RuvA specifically binds to HJ cruciform DNA, conferring on it an open structure. The RuvB hexamer acts as an ATP-dependent pump, pulling dsDNA into and through the RuvAB complex. RuvB forms 2 homohexamers on either side of HJ DNA bound by 1 or 2 RuvA tetramers; 4 subunits per hexamer contact DNA at a time. Coordinated motions by a converter formed by DNA-disengaged RuvB subunits stimulates ATP hydrolysis and nucleotide exchange. Immobilization of the converter enables RuvB to convert the ATP-contained energy into a lever motion, pulling 2 nucleotides of DNA out of the RuvA tetramer per ATP hydrolyzed, thus driving DNA branch migration. The RuvB motors rotate together with the DNA substrate, which together with the progressing nucleotide cycle form the mechanistic basis for DNA recombination by continuous HJ branch migration. Branch migration allows RuvC to scan DNA until it finds its consensus sequence, where it cleaves and resolves cruciform DNA. The sequence is that of Holliday junction branch migration complex subunit RuvB from Anaplasma marginale (strain St. Maries).